The sequence spans 409 residues: Elongation factor Tu, chloroplastic (409 aa).

One can recognise a tr-type G domain in the interval 10–214 (KPHINIGTIG…QVDSYIPTPT (205 aa)). The interval 19–26 (GHVDHGKT) is G1. 19-26 (GHVDHGKT) contacts GTP. Residue threonine 26 coordinates Mg(2+). At lysine 57 the chain carries N6-methyllysine. The G2 stretch occupies residues 60-64 (GITIN). The tract at residues 81-84 (DCPG) is G3. Residues 81–85 (DCPGH) and 136–139 (NKED) contribute to the GTP site. Positions 136–139 (NKED) are G4. Residues 174 to 176 (SAL) are G5.

It belongs to the TRAFAC class translation factor GTPase superfamily. Classic translation factor GTPase family. EF-Tu/EF-1A subfamily.

The protein resides in the plastid. It localises to the chloroplast. The catalysed reaction is GTP + H2O = GDP + phosphate + H(+). In terms of biological role, GTP hydrolase that promotes the GTP-dependent binding of aminoacyl-tRNA to the A-site of ribosomes during protein biosynthesis. This Euglena gracilis protein is Elongation factor Tu, chloroplastic (tufA).